The primary structure comprises 82 residues: Polyferredoxin protein FwdG (82 aa).

4Fe-4S ferredoxin-type domains follow at residues 4–33 (YELV…PETW) and 51–80 (VVTV…LVFK). C13, C16, C19, C23, C60, C63, C66, and C70 together coordinate [4Fe-4S] cluster.

[4Fe-4S] cluster is required as a cofactor.

In Methanocaldococcus jannaschii (strain ATCC 43067 / DSM 2661 / JAL-1 / JCM 10045 / NBRC 100440) (Methanococcus jannaschii), this protein is Polyferredoxin protein FwdG (fwdG).